The chain runs to 133 residues: Large ribosomal subunit protein uL22 (133 aa).

This sequence belongs to the universal ribosomal protein uL22 family. In terms of assembly, part of the 50S ribosomal subunit.

Functionally, this protein binds specifically to 23S rRNA; its binding is stimulated by other ribosomal proteins, e.g. L4, L17, and L20. It is important during the early stages of 50S assembly. It makes multiple contacts with different domains of the 23S rRNA in the assembled 50S subunit and ribosome. Its function is as follows. The globular domain of the protein is located near the polypeptide exit tunnel on the outside of the subunit, while an extended beta-hairpin is found that lines the wall of the exit tunnel in the center of the 70S ribosome. This chain is Large ribosomal subunit protein uL22, found in Aquifex aeolicus (strain VF5).